The sequence spans 601 residues: Methionine--tRNA ligase (601 aa).

The short motif at Pro-21 to His-31 is the 'HIGH' region element. 4 residues coordinate Zn(2+): Cys-153, Cys-156, Cys-166, and Cys-169. Asn-361 lines the ATP pocket.

It belongs to the class-I aminoacyl-tRNA synthetase family. MetG type 1 subfamily. Monomer. Requires Zn(2+) as cofactor.

The protein localises to the cytoplasm. It catalyses the reaction tRNA(Met) + L-methionine + ATP = L-methionyl-tRNA(Met) + AMP + diphosphate. In terms of biological role, is required not only for elongation of protein synthesis but also for the initiation of all mRNA translation through initiator tRNA(fMet) aminoacylation. The chain is Methionine--tRNA ligase from Cutibacterium acnes (strain DSM 16379 / KPA171202) (Propionibacterium acnes).